A 293-amino-acid polypeptide reads, in one-letter code: Zinc metalloproteinase nas-2 (293 aa).

A signal peptide spans 1–17; the sequence is MIFPLLLTLILPNFVAP. A propeptide spanning residues 18–67 is cleaved from the precursor; that stretch reads KVLEPEKDDEIAVSTQREKTFFDMKLILTKLPTFEPSKYGHINIPLRKKR. The 194-residue stretch at 67-260 folds into the Peptidase M12A domain; the sequence is RGIALHPLQW…ININTFYKCK (194 aa). A glycan (N-linked (GlcNAc...) asparagine) is linked at Asn-111. 2 disulfide bridges follow: Cys-114–Cys-259 and Cys-139–Cys-169. His-180 contributes to the Zn(2+) binding site. Glu-181 is an active-site residue. 2 residues coordinate Zn(2+): His-184 and His-190. Asn-287 carries N-linked (GlcNAc...) asparagine glycosylation.

It depends on Zn(2+) as a cofactor.

It localises to the secreted. Metalloprotease. The polypeptide is Zinc metalloproteinase nas-2 (nas-2) (Caenorhabditis elegans).